The primary structure comprises 391 residues: Nuclear hormone receptor family member nhr-218 (391 aa).

Positions 17–93 (PIPCQICTYQ…MGMKAEKIQQ (77 aa)) form a DNA-binding region, nuclear receptor. 2 NR C4-type zinc fingers span residues 20–40 (CQIC…CRAC) and 56–76 (CKTR…CRLC). The NR LBD domain occupies 146-391 (SRNYSDSPLT…DNFCNLFAMK (246 aa)).

This sequence belongs to the nuclear hormone receptor family.

It localises to the nucleus. In terms of biological role, orphan nuclear receptor. The sequence is that of Nuclear hormone receptor family member nhr-218 (nhr-218) from Caenorhabditis elegans.